We begin with the raw amino-acid sequence, 406 residues long: Coenzyme A biosynthesis bifunctional protein CoaBC (406 aa).

A phosphopantothenoylcysteine decarboxylase region spans residues 2 to 190 (SLAGKKIVLG…SPVNDLKHLN (189 aa)). C158 functions as the Proton donor in the catalytic mechanism. The phosphopantothenate--cysteine ligase stretch occupies residues 191 to 406 (IMITAGPTRE…VTRYDEKNRR (216 aa)). Residues 273 to 275 (GCA), D279, K289, 308 to 311 (PDIV), F327, K341, and K345 contribute to the CTP site.

The protein in the N-terminal section; belongs to the HFCD (homo-oligomeric flavin containing Cys decarboxylase) superfamily. This sequence in the C-terminal section; belongs to the PPC synthetase family. It depends on Mg(2+) as a cofactor. Requires FMN as cofactor.

The catalysed reaction is N-[(R)-4-phosphopantothenoyl]-L-cysteine + H(+) = (R)-4'-phosphopantetheine + CO2. The enzyme catalyses (R)-4'-phosphopantothenate + L-cysteine + CTP = N-[(R)-4-phosphopantothenoyl]-L-cysteine + CMP + diphosphate + H(+). It participates in cofactor biosynthesis; coenzyme A biosynthesis; CoA from (R)-pantothenate: step 2/5. The protein operates within cofactor biosynthesis; coenzyme A biosynthesis; CoA from (R)-pantothenate: step 3/5. Functionally, catalyzes two sequential steps in the biosynthesis of coenzyme A. In the first step cysteine is conjugated to 4'-phosphopantothenate to form 4-phosphopantothenoylcysteine. In the second step the latter compound is decarboxylated to form 4'-phosphopantotheine. The polypeptide is Coenzyme A biosynthesis bifunctional protein CoaBC (Escherichia coli O6:H1 (strain CFT073 / ATCC 700928 / UPEC)).